Consider the following 317-residue polypeptide: Ferrochelatase (317 aa).

H192 and E271 together coordinate Fe cation.

This sequence belongs to the ferrochelatase family.

It is found in the cytoplasm. It catalyses the reaction heme b + 2 H(+) = protoporphyrin IX + Fe(2+). Its pathway is porphyrin-containing compound metabolism; protoheme biosynthesis; protoheme from protoporphyrin-IX: step 1/1. Functionally, catalyzes the ferrous insertion into protoporphyrin IX. This chain is Ferrochelatase, found in Geobacter sp. (strain M21).